A 320-amino-acid chain; its full sequence is tRNA U34 carboxymethyltransferase (320 aa).

Carboxy-S-adenosyl-L-methionine is bound by residues Lys-89, Trp-103, Lys-108, Gly-128, 150-152 (DPT), 179-180 (IE), Met-194, Tyr-198, and Arg-313.

Belongs to the class I-like SAM-binding methyltransferase superfamily. CmoB family. Homotetramer.

The catalysed reaction is carboxy-S-adenosyl-L-methionine + 5-hydroxyuridine(34) in tRNA = 5-carboxymethoxyuridine(34) in tRNA + S-adenosyl-L-homocysteine + H(+). Functionally, catalyzes carboxymethyl transfer from carboxy-S-adenosyl-L-methionine (Cx-SAM) to 5-hydroxyuridine (ho5U) to form 5-carboxymethoxyuridine (cmo5U) at position 34 in tRNAs. This chain is tRNA U34 carboxymethyltransferase, found in Glaesserella parasuis serovar 5 (strain SH0165) (Haemophilus parasuis).